A 354-amino-acid chain; its full sequence is NADH-quinone oxidoreductase subunit H (354 aa).

The next 8 helical transmembrane spans lie at 25-45 (LVRI…LILW), 91-111 (WIYM…WAVI), 126-146 (LLYA…AGWA), 170-190 (MGFA…SGIV), 205-225 (FLSW…ISGI), 267-287 (IVIS…PFGF), 290-310 (FIPG…VFIW), and 330-350 (IFIP…MSPL).

The protein belongs to the complex I subunit 1 family. NDH-1 is composed of 14 different subunits. Subunits NuoA, H, J, K, L, M, N constitute the membrane sector of the complex.

The protein localises to the cell inner membrane. It carries out the reaction a quinone + NADH + 5 H(+)(in) = a quinol + NAD(+) + 4 H(+)(out). Functionally, NDH-1 shuttles electrons from NADH, via FMN and iron-sulfur (Fe-S) centers, to quinones in the respiratory chain. The immediate electron acceptor for the enzyme in this species is believed to be ubiquinone. Couples the redox reaction to proton translocation (for every two electrons transferred, four hydrogen ions are translocated across the cytoplasmic membrane), and thus conserves the redox energy in a proton gradient. This subunit may bind ubiquinone. This chain is NADH-quinone oxidoreductase subunit H, found in Paraburkholderia xenovorans (strain LB400).